A 207-amino-acid polypeptide reads, in one-letter code: Transcriptional regulatory protein RcsA (207 aa).

Positions 131–196 (LTLPTLSLSK…VIYHIVRLTE (66 aa)) constitute an HTH luxR-type domain. A DNA-binding region (H-T-H motif) is located at residues 155-174 (TSQISTQMNIKAKTVSSHKG).

It belongs to the RcsA family.

Component of the Rcs signaling system, which controls transcription of numerous genes. Binds to DNA to regulate expression of genes. The protein is Transcriptional regulatory protein RcsA of Klebsiella aerogenes (Enterobacter aerogenes).